A 348-amino-acid polypeptide reads, in one-letter code: E3 ubiquitin-protein ligase MARCHF9 (348 aa).

Residues 48 to 96 (ARDGDGDEEEYYGSEPRARGLAGDKEPRAGPPPPPAPPPPPPGALDALS) are disordered. The segment covering 63-75 (PRARGLAGDKEPR) has biased composition (basic and acidic residues). Residues 76–90 (AGPPPPPAPPPPPPG) show a composition bias toward pro residues. The RING-CH-type zinc-finger motif lies at 102–162 (DSGLRTPQCR…ELCYFKYQVL (61 aa)). Residues cysteine 110, cysteine 113, cysteine 126, cysteine 128, histidine 136, cysteine 139, cysteine 152, and cysteine 155 each contribute to the Zn(2+) site. 2 helical membrane passes run 185-205 (IAAI…LIWS) and 219-239 (LFQI…GLIV). Disordered regions lie at residues 272-304 (GDTG…AAQR) and 328-348 (PPDA…VTTV).

In terms of assembly, homodimer.

The protein resides in the golgi apparatus membrane. Its subcellular location is the lysosome membrane. The catalysed reaction is S-ubiquitinyl-[E2 ubiquitin-conjugating enzyme]-L-cysteine + [acceptor protein]-L-lysine = [E2 ubiquitin-conjugating enzyme]-L-cysteine + N(6)-ubiquitinyl-[acceptor protein]-L-lysine.. Its pathway is protein modification; protein ubiquitination. In terms of biological role, E3 ubiquitin-protein ligase that may mediate ubiquitination of MHC-I, CD4 and ICAM1, and promote their subsequent endocytosis and sorting to lysosomes via multivesicular bodies. E3 ubiquitin ligases accept ubiquitin from an E2 ubiquitin-conjugating enzyme in the form of a thioester and then directly transfer the ubiquitin to targeted substrates. The sequence is that of E3 ubiquitin-protein ligase MARCHF9 (Marchf9) from Mus musculus (Mouse).